The sequence spans 447 residues: UDP-glycosyltransferase 76E3 (447 aa).

UDP-alpha-D-glucose is bound by residues Ser-269, 328-330 (APQ), 345-353 (HCGWNSTLE), and 367-370 (QGEQ).

It belongs to the UDP-glycosyltransferase family.

The polypeptide is UDP-glycosyltransferase 76E3 (UGT76E3) (Arabidopsis thaliana (Mouse-ear cress)).